We begin with the raw amino-acid sequence, 160 residues long: Putative UPF0479 protein YNL339W-B (160 aa).

2 helical membrane-spanning segments follow: residues 39–59 (IVFC…KVLQ) and 136–156 (VPMI…ISQH).

The protein belongs to the UPF0479 family.

Its subcellular location is the membrane. In Saccharomyces cerevisiae (strain ATCC 204508 / S288c) (Baker's yeast), this protein is Putative UPF0479 protein YNL339W-B.